A 172-amino-acid chain; its full sequence is Ribosome maturation factor RimM (172 aa).

The region spanning 96–168 (EGEFYYHEII…RVDVEIPEGL (73 aa)) is the PRC barrel domain.

This sequence belongs to the RimM family. As to quaternary structure, binds ribosomal protein uS19.

The protein localises to the cytoplasm. Its function is as follows. An accessory protein needed during the final step in the assembly of 30S ribosomal subunit, possibly for assembly of the head region. Essential for efficient processing of 16S rRNA. May be needed both before and after RbfA during the maturation of 16S rRNA. It has affinity for free ribosomal 30S subunits but not for 70S ribosomes. The polypeptide is Ribosome maturation factor RimM (Streptococcus gordonii (strain Challis / ATCC 35105 / BCRC 15272 / CH1 / DL1 / V288)).